Consider the following 121-residue polypeptide: B-box domain protein 31 (121 aa).

A B box-type; atypical zinc finger spans residues 26–72 (SVPVRCELCDGDASVFCEADSAFLCRKCDRWVHGANFLAWRHVRRVL). Residues 117–121 (PFVFL) carry the PFVFL motif.

As to expression, highly expressed in shoot apical meristems and in vascular tissues of leaves. Also detected in petioles.

Developmental regulator acting by forming heterodimeric complexes, that sequester CO and CO-like (COL) proteins into non-functional complexes. Involved in the CO-mediated long-day flowering-promotion pathway. Engages CO and the transcriptional repressor TPL in a tripartite complex. This chain is B-box domain protein 31, found in Arabidopsis thaliana (Mouse-ear cress).